Consider the following 97-residue polypeptide: uncharacterized protein (97 aa).

This is an uncharacterized protein from Methanocaldococcus jannaschii (strain ATCC 43067 / DSM 2661 / JAL-1 / JCM 10045 / NBRC 100440) (Methanococcus jannaschii).